We begin with the raw amino-acid sequence, 208 residues long: Thiamine-phosphate synthase (208 aa).

4-amino-2-methyl-5-(diphosphooxymethyl)pyrimidine is bound by residues 38 to 42 and asparagine 70; that span reads QYRSK. The Mg(2+) site is built by aspartate 71 and aspartate 90. Residue threonine 109 coordinates 4-amino-2-methyl-5-(diphosphooxymethyl)pyrimidine. A 2-[(2R,5Z)-2-carboxy-4-methylthiazol-5(2H)-ylidene]ethyl phosphate-binding site is contributed by 136-138; sequence SAT. Lysine 139 provides a ligand contact to 4-amino-2-methyl-5-(diphosphooxymethyl)pyrimidine. 2-[(2R,5Z)-2-carboxy-4-methylthiazol-5(2H)-ylidene]ethyl phosphate-binding positions include glycine 166 and 186-187; that span reads VS.

Belongs to the thiamine-phosphate synthase family. Mg(2+) serves as cofactor.

It catalyses the reaction 2-[(2R,5Z)-2-carboxy-4-methylthiazol-5(2H)-ylidene]ethyl phosphate + 4-amino-2-methyl-5-(diphosphooxymethyl)pyrimidine + 2 H(+) = thiamine phosphate + CO2 + diphosphate. The enzyme catalyses 2-(2-carboxy-4-methylthiazol-5-yl)ethyl phosphate + 4-amino-2-methyl-5-(diphosphooxymethyl)pyrimidine + 2 H(+) = thiamine phosphate + CO2 + diphosphate. The catalysed reaction is 4-methyl-5-(2-phosphooxyethyl)-thiazole + 4-amino-2-methyl-5-(diphosphooxymethyl)pyrimidine + H(+) = thiamine phosphate + diphosphate. It functions in the pathway cofactor biosynthesis; thiamine diphosphate biosynthesis; thiamine phosphate from 4-amino-2-methyl-5-diphosphomethylpyrimidine and 4-methyl-5-(2-phosphoethyl)-thiazole: step 1/1. Condenses 4-methyl-5-(beta-hydroxyethyl)thiazole monophosphate (THZ-P) and 2-methyl-4-amino-5-hydroxymethyl pyrimidine pyrophosphate (HMP-PP) to form thiamine monophosphate (TMP). In Aromatoleum aromaticum (strain DSM 19018 / LMG 30748 / EbN1) (Azoarcus sp. (strain EbN1)), this protein is Thiamine-phosphate synthase.